The sequence spans 142 residues: Secreted acidic protein 1B (142 aa).

2 stretches are compositionally biased toward acidic residues: residues 1 to 47 (SDDE…DDNE) and 54 to 64 (TNDDVDYGDGN). The segment at 1–74 (SDDESGDDEN…DEAREIGDHS (74 aa)) is disordered. Residues 1 to 123 (SDDESGDDEN…YLRSGGSHFK (123 aa)) lie on the Extracellular side of the membrane. Over residues 65-74 (DEAREIGDHS) the composition is skewed to basic and acidic residues. Residues 124-141 (GQLLNITLGLGFCILFLL) form a helical membrane-spanning segment. A topological domain (cytoplasmic) is located at residue Leu142.

As to expression, component of the acid-insoluble and acid-soluble organic matrix of the aragonitic skeleton (at protein level).

The protein localises to the membrane. This is Secreted acidic protein 1B from Acropora millepora (Staghorn coral).